The chain runs to 242 residues: uncharacterized protein (242 aa).

3 helical membrane passes run 75 to 95, 116 to 136, and 176 to 196; these read YAIFHIFLPFILTLLLYHNFY, IVLIFTYVMTVIIVYFSFSLI, and IQGLAHIILSLLLFILGLEVI. The disordered stretch occupies residues 204-242; that stretch reads DVEMSSMRGQAITTEPASDNTMAEGTDCNTSKDVESGSS. The span at 210 to 232 shows a compositional bias: polar residues; the sequence is MRGQAITTEPASDNTMAEGTDCN. The segment covering 233–242 has biased composition (basic and acidic residues); it reads TSKDVESGSS.

It localises to the cytoplasm. The protein resides in the membrane. This is an uncharacterized protein from Schizosaccharomyces pombe (strain 972 / ATCC 24843) (Fission yeast).